The following is a 440-amino-acid chain: Phosphoglucosamine mutase (440 aa).

Serine 97 (phosphoserine intermediate) is an active-site residue. Mg(2+) is bound by residues serine 97, aspartate 237, aspartate 239, and aspartate 241. Serine 97 is subject to Phosphoserine.

It belongs to the phosphohexose mutase family. The cofactor is Mg(2+). In terms of processing, activated by phosphorylation.

It carries out the reaction alpha-D-glucosamine 1-phosphate = D-glucosamine 6-phosphate. Catalyzes the conversion of glucosamine-6-phosphate to glucosamine-1-phosphate. The chain is Phosphoglucosamine mutase from Nautilia profundicola (strain ATCC BAA-1463 / DSM 18972 / AmH).